Consider the following 302-residue polypeptide: Putative glycine N-acyltransferase-like protein 1B (302 aa).

It belongs to the glycine N-acyltransferase family.

The catalysed reaction is an acyl-CoA + L-glutamine = an N(2)-acyl-L-glutamine + CoA + H(+). In terms of biological role, putative acyltransferase which transfers an acyl group to the N-terminus of glutamine. Can use phenylacetyl-CoA as an acyl donor. The sequence is that of Putative glycine N-acyltransferase-like protein 1B from Homo sapiens (Human).